A 162-amino-acid polypeptide reads, in one-letter code: NADH-quinone oxidoreductase subunit I (162 aa).

2 4Fe-4S ferredoxin-type domains span residues 53–83 and 93–122; these read LRRY…IEAE and TRYD…EGPN. Positions 63, 66, 69, 73, 102, 105, 108, and 112 each coordinate [4Fe-4S] cluster.

This sequence belongs to the complex I 23 kDa subunit family. In terms of assembly, NDH-1 is composed of 14 different subunits. Subunits NuoA, H, J, K, L, M, N constitute the membrane sector of the complex. It depends on [4Fe-4S] cluster as a cofactor.

It localises to the cell inner membrane. The enzyme catalyses a quinone + NADH + 5 H(+)(in) = a quinol + NAD(+) + 4 H(+)(out). Its function is as follows. NDH-1 shuttles electrons from NADH, via FMN and iron-sulfur (Fe-S) centers, to quinones in the respiratory chain. The immediate electron acceptor for the enzyme in this species is believed to be ubiquinone. Couples the redox reaction to proton translocation (for every two electrons transferred, four hydrogen ions are translocated across the cytoplasmic membrane), and thus conserves the redox energy in a proton gradient. This is NADH-quinone oxidoreductase subunit I from Sphingopyxis alaskensis (strain DSM 13593 / LMG 18877 / RB2256) (Sphingomonas alaskensis).